The chain runs to 81 residues: DNA-directed RNA polymerase subunit Rpo6 (81 aa).

It belongs to the archaeal Rpo6/eukaryotic RPB6 RNA polymerase subunit family. Part of the RNA polymerase complex.

It is found in the cytoplasm. The catalysed reaction is RNA(n) + a ribonucleoside 5'-triphosphate = RNA(n+1) + diphosphate. DNA-dependent RNA polymerase (RNAP) catalyzes the transcription of DNA into RNA using the four ribonucleoside triphosphates as substrates. In Thermofilum pendens (strain DSM 2475 / Hrk 5), this protein is DNA-directed RNA polymerase subunit Rpo6.